We begin with the raw amino-acid sequence, 597 residues long: MVTRHVLAAALAGSMTSAQRLHPTSQRASDDLIQNLPGLDPAAKVTQHAGRIALHDNDKNKMFYWHFQAAQDPEKAPLVIWLNGGPGCTSMQGLFLGNSPFTLKDDSTIGKNEHSWHEFANLLFVDQPIGTGMSYTKGNDYRLDEETIAQDFYEFLTKFLQRHNKYLSDGDDGVSNSRAVYMFGESHAGRWIPEFSDHIMKQNNDPKNQIKINLDGVGIGNGWVHPRIQYEYSDYAHGLGLLTFGQVRSLKASYAECLAALDAGTYYSRSCLDNMDSITGSVKPGNGGNSLNFYDVRQYLRNVGSYPSGQSNIAKYMNKMEVRKAVHGNEDKNFRFDLCSNGVFRALSKFDGVSTLDKVESLLQQGLRMIFYNGQWDMMCNHYGTEKLLLNLNWNGSDAYQQADKYTWRVQGRKEPAGFAQQGGNLTYLVVTGAGHMVPMDVPDVAADILRRFVNRLEFNDKVQTVVTTRLNATDMEVSFCYSPSVSADPDTSLSTRDQTGANSSQVHIGIAWLWVALVIAVVSSVLAVCVTIVCIRNKRNGKQEHEMITQVSDDEEVNQIEDESEEGFSDEDVGVHVLVSNVSQRATSPRSRVTEV.

The N-terminal stretch at methionine 1–alanine 18 is a signal peptide. Residues glutamine 19–histidine 508 lie on the Lumenal side of the membrane. Residues serine 186 and aspartate 377 contribute to the active site. Asparagine 395 and asparagine 425 each carry an N-linked (GlcNAc...) asparagine glycan. Histidine 436 is an active-site residue. N-linked (GlcNAc...) asparagine glycans are attached at residues asparagine 472 and asparagine 503. A helical transmembrane segment spans residues isoleucine 509 to valine 529. Topologically, residues cysteine 530 to valine 597 are cytoplasmic.

Belongs to the peptidase S10 family.

It localises to the golgi apparatus. The protein resides in the trans-Golgi network membrane. It catalyses the reaction Preferential release of a C-terminal arginine or lysine residue.. Functionally, protease with a carboxypeptidase B-like function involved in the C-terminal processing of the lysine and arginine residues from protein precursors. Promotes cell fusion and is involved in the programmed cell death. The protein is Pheromone-processing carboxypeptidase KEX1 (KEX1) of Phytophthora infestans (strain T30-4) (Potato late blight agent).